We begin with the raw amino-acid sequence, 336 residues long: tRNA N6-adenosine threonylcarbamoyltransferase (336 aa).

Residues His-114 and His-118 each coordinate Fe cation. Substrate-binding positions include Leu-136–Gly-140, Asp-169, Gly-182, Asp-186, and Asn-275. Asp-301 provides a ligand contact to Fe cation.

Belongs to the KAE1 / TsaD family. Fe(2+) is required as a cofactor.

The protein resides in the cytoplasm. The catalysed reaction is L-threonylcarbamoyladenylate + adenosine(37) in tRNA = N(6)-L-threonylcarbamoyladenosine(37) in tRNA + AMP + H(+). Required for the formation of a threonylcarbamoyl group on adenosine at position 37 (t(6)A37) in tRNAs that read codons beginning with adenine. Is involved in the transfer of the threonylcarbamoyl moiety of threonylcarbamoyl-AMP (TC-AMP) to the N6 group of A37, together with TsaE and TsaB. TsaD likely plays a direct catalytic role in this reaction. The chain is tRNA N6-adenosine threonylcarbamoyltransferase from Streptococcus mutans serotype c (strain ATCC 700610 / UA159).